Consider the following 825-residue polypeptide: MVGKSQQTDVIEKKKHMAIPKSSSPKATHRIGNTSGSKGSYSAKAYESIRVSSELQQTWTKRKHGQEMTSKSLQTDTIVEEKKEVKLVEETVVPEEKSADVREAAIELPESVQDVEIPPNIPSVQLKMDRSQQTSRTGYWTMMNIPPVEKVDKEQQTYFSESEIVVISRPDSSSTKSKEDALKHKSSGKIFASEHPEFQPATNSNEEIGQKNISRTSFTQETKKGPPVLLEDELREEVTVPVVQEGSAVKKVASAEIEPPSTEKFPAKIQPPLVEEATAKAEPRPAEETHVQVQPSTEETPDAEAATAVAENSVKVQPPPAEEAPLVEFPAEIQPPSAEESPSVELLAEILPPSAEESPSEEPPAEILPPPAEKSPSVELLGEIRSPSAQKAPIEVQPLPAEGALEEAPAKVEPPTVEETLADVQPLLPEEAPREEARELQLSTAMETPAEEAPTEFQSPLPKETTAEEASAEIQLLAATEPPADETPAEARSPLSEETSAEEAHAEVQSPLAEETTAEEASAEIQLLAAIEAPADETPAEAQSPLSEETSAEEAPAEVQSPSAKGVSIEEAPLELQPPSGEETTAEEASAAIQLLAATEASAEEAPAEVQPPPAEEAPAEVQPPPAEEAPAEVQPPPAEEAPAEVQPPPAEEAPAEVQPPPAEEAPAEVQPPPAEEAPAEVQSLPAEETPIEETLAAVHSPPADDVPAEEASVDKHSPPADLLLTEEFPIGEASAEVSPPPSEQTPEDEALVENVSTEFQSPQVAGIPAVKLGSVVLEGEAKFEEVSKINSVLKDLSNTNDGQAPTLEIESVFHIELKQRPPEL.

Disordered regions lie at residues 1 to 43 (MVGK…SYSA) and 113 to 139 (QDVE…RTGY). The segment covering 21 to 40 (KSSSPKATHRIGNTSGSKGS) has biased composition (polar residues). Phosphoserine is present on Ser-160. Disordered stretches follow at residues 168 to 232 (SRPD…LLED), 244 to 718 (QEGS…DKHS), and 732 to 751 (GEAS…EDEA). Polar residues predominate over residues 200 to 220 (PATNSNEEIGQKNISRTSFTQ). Residues 277–290 (ATAKAEPRPAEETH) show a composition bias toward basic and acidic residues. Composition is skewed to low complexity over residues 348-357 (AEILPPSAEE) and 398-407 (PLPAEGALEE). Residues 610–676 (VQPPPAEEAP…PAEVQPPPAE (67 aa)) are compositionally biased toward pro residues.

As to quaternary structure, interacts with CABYR. Interacts with ROPN1 and ROPN1L; the interaction increases upon spermatozoa capacitation conditions. In terms of processing, phosphorylated by PKA upon spermatozoa capacitation conditions.

Its subcellular location is the cell projection. It localises to the cilium. It is found in the flagellum. Its function is as follows. May be involved in the later stages of fibrous sheath biogenesis and spermatozoa capacitation. Inhibits ROPN1 and ROPN1L SUMOylation. Binds calcium. This is Fibrous sheath CABYR-binding protein (FSCB) from Homo sapiens (Human).